We begin with the raw amino-acid sequence, 621 residues long: 1-deoxy-D-xylulose-5-phosphate synthase (621 aa).

Thiamine diphosphate-binding positions include histidine 80 and 121–123 (GHS). Aspartate 152 serves as a coordination point for Mg(2+). Thiamine diphosphate is bound by residues 153 to 154 (GA), asparagine 181, tyrosine 288, and glutamate 370. Asparagine 181 contacts Mg(2+).

This sequence belongs to the transketolase family. DXPS subfamily. Homodimer. It depends on Mg(2+) as a cofactor. Requires thiamine diphosphate as cofactor.

It carries out the reaction D-glyceraldehyde 3-phosphate + pyruvate + H(+) = 1-deoxy-D-xylulose 5-phosphate + CO2. It functions in the pathway metabolic intermediate biosynthesis; 1-deoxy-D-xylulose 5-phosphate biosynthesis; 1-deoxy-D-xylulose 5-phosphate from D-glyceraldehyde 3-phosphate and pyruvate: step 1/1. Its function is as follows. Catalyzes the acyloin condensation reaction between C atoms 2 and 3 of pyruvate and glyceraldehyde 3-phosphate to yield 1-deoxy-D-xylulose-5-phosphate (DXP). The chain is 1-deoxy-D-xylulose-5-phosphate synthase from Shewanella sediminis (strain HAW-EB3).